The sequence spans 213 residues: LexA repressor (213 aa).

A DNA-binding region (H-T-H motif) is located at residues 27–47 (QTEIARAFGFKGVRAAQYHLE). Residues S133 and K170 each act as for autocatalytic cleavage activity in the active site.

This sequence belongs to the peptidase S24 family. As to quaternary structure, homodimer.

The catalysed reaction is Hydrolysis of Ala-|-Gly bond in repressor LexA.. In terms of biological role, represses a number of genes involved in the response to DNA damage (SOS response), including recA and lexA. In the presence of single-stranded DNA, RecA interacts with LexA causing an autocatalytic cleavage which disrupts the DNA-binding part of LexA, leading to derepression of the SOS regulon and eventually DNA repair. This is LexA repressor from Xanthomonas campestris.